The following is a 346-amino-acid chain: Holliday junction branch migration complex subunit RuvB (346 aa).

A large ATPase domain (RuvB-L) region spans residues 1-182 (MSERLVTSNE…FGVLCSMEYY (182 aa)). ATP-binding positions include Leu21, Arg22, Gly63, Lys66, Thr67, Thr68, 129 to 131 (EDY), Arg172, Tyr182, and Arg219. Thr67 is a binding site for Mg(2+). The small ATPAse domain (RuvB-S) stretch occupies residues 183-253 (TDEQLKEIII…AAKKSLEILE (71 aa)). Positions 256–346 (GEGFDRIDNK…DSKQCTLFEK (91 aa)) are head domain (RuvB-H). The DNA site is built by Arg311 and Arg316.

It belongs to the RuvB family. As to quaternary structure, homohexamer. Forms an RuvA(8)-RuvB(12)-Holliday junction (HJ) complex. HJ DNA is sandwiched between 2 RuvA tetramers; dsDNA enters through RuvA and exits via RuvB. An RuvB hexamer assembles on each DNA strand where it exits the tetramer. Each RuvB hexamer is contacted by two RuvA subunits (via domain III) on 2 adjacent RuvB subunits; this complex drives branch migration. In the full resolvosome a probable DNA-RuvA(4)-RuvB(12)-RuvC(2) complex forms which resolves the HJ.

It is found in the cytoplasm. It carries out the reaction ATP + H2O = ADP + phosphate + H(+). The RuvA-RuvB-RuvC complex processes Holliday junction (HJ) DNA during genetic recombination and DNA repair, while the RuvA-RuvB complex plays an important role in the rescue of blocked DNA replication forks via replication fork reversal (RFR). RuvA specifically binds to HJ cruciform DNA, conferring on it an open structure. The RuvB hexamer acts as an ATP-dependent pump, pulling dsDNA into and through the RuvAB complex. RuvB forms 2 homohexamers on either side of HJ DNA bound by 1 or 2 RuvA tetramers; 4 subunits per hexamer contact DNA at a time. Coordinated motions by a converter formed by DNA-disengaged RuvB subunits stimulates ATP hydrolysis and nucleotide exchange. Immobilization of the converter enables RuvB to convert the ATP-contained energy into a lever motion, pulling 2 nucleotides of DNA out of the RuvA tetramer per ATP hydrolyzed, thus driving DNA branch migration. The RuvB motors rotate together with the DNA substrate, which together with the progressing nucleotide cycle form the mechanistic basis for DNA recombination by continuous HJ branch migration. Branch migration allows RuvC to scan DNA until it finds its consensus sequence, where it cleaves and resolves cruciform DNA. The polypeptide is Holliday junction branch migration complex subunit RuvB (Clostridium perfringens (strain ATCC 13124 / DSM 756 / JCM 1290 / NCIMB 6125 / NCTC 8237 / Type A)).